Consider the following 441-residue polypeptide: Keratin, type I cytoskeletal 17 (441 aa).

Residues 1–23 (MTTTIRHFSSGSIKGSSGLAGGS) are disordered. The tract at residues 1–91 (MTTTIRHFSS…GGVDGLLVGG (91 aa)) is head. Residues 9 to 23 (SSGSIKGSSGLAGGS) show a composition bias toward low complexity. A Phosphoserine modification is found at Ser-12. Lys-14 is covalently cross-linked (Glycyl lysine isopeptide (Lys-Gly) (interchain with G-Cter in SUMO1); alternate). Residue Lys-14 forms a Glycyl lysine isopeptide (Lys-Gly) (interchain with G-Cter in SUMO2); alternate linkage. Residues Ser-24, Ser-30, Ser-32, and Ser-37 each carry the phosphoserine modification. Residue Ser-42 is modified to Phosphoserine; by RPS6KA1. Residues 92 to 128 (EKATMQNLNDRLASYLDKVRALEEANTELELKIRDWY) are coil 1A. The 312-residue stretch at 92–403 (EKATMQNLND…RLLEGEDAHL (312 aa)) folds into the IF rod domain. Thr-118 bears the Phosphothreonine mark. The linker 1 stretch occupies residues 129 to 146 (QKQAPGPAPDYSSYFKTI). The coil 1B stretch occupies residues 147–238 (EDLRNKIHTA…NHEEEMKALR (92 aa)). A linker 12 region spans residues 239–258 (GQVGGEINVEMDAAPGVDLS). The interval 259–400 (RILNEMRDQY…TYRRLLEGED (142 aa)) is coil 2. Residue Lys-286 forms a Glycyl lysine isopeptide (Lys-Gly) (interchain with G-Cter in SUMO2) linkage. Thr-287 bears the Phosphothreonine mark. Ser-331 carries the post-translational modification Phosphoserine. Residues 401–441 (AHLTQYKTKEPVTTRQVRTIVEEVQDGRVISSREQVHQTSH) are tail. Glycyl lysine isopeptide (Lys-Gly) (interchain with G-Cter in SUMO1); alternate cross-links involve residues Lys-407 and Lys-409. Glycyl lysine isopeptide (Lys-Gly) (interchain with G-Cter in SUMO2); alternate cross-links involve residues Lys-407 and Lys-409.

Belongs to the intermediate filament family. In terms of assembly, heterodimer of a type I and a type II keratin. KRT17 associates with KRT6 isomers (KRT6A or KRT6B). Interacts with TRADD and SFN. Phosphorylation at Ser-42 occurs in a growth- and stress-dependent fashion in skin keratinocytes, it has no effect on filament organization.

It is found in the cytoplasm. Functionally, type I keratin involved in the formation and maintenance of various skin appendages, specifically in determining shape and orientation of hair. Required for the correct growth of hair follicles, in particular for the persistence of the anagen (growth) state. Modulates the function of TNF-alpha in the specific context of hair cycling. Regulates protein synthesis and epithelial cell growth through binding to the adapter protein SFN and by stimulating Akt/mTOR pathway. Involved in tissue repair. May be a marker of basal cell differentiation in complex epithelia and therefore indicative of a certain type of epithelial 'stem cells'. Acts as a promoter of epithelial proliferation by acting a regulator of immune response in skin: promotes Th1/Th17-dominated immune environment contributing to the development of basaloid skin tumors. May act as an autoantigen in the immunopathogenesis of psoriasis, with certain peptide regions being a major target for autoreactive T-cells and hence causing their proliferation. This is Keratin, type I cytoskeletal 17 from Bos taurus (Bovine).